Consider the following 118-residue polypeptide: ATP synthase subunit c (118 aa).

2 consecutive transmembrane segments (helical) span residues 34–54 (AIFA…GAVG) and 88–108 (MAMA…LIFA).

It belongs to the ATPase C chain family. In terms of assembly, F-type ATPases have 2 components, F(1) - the catalytic core - and F(0) - the membrane proton channel. F(1) has five subunits: alpha(3), beta(3), gamma(1), delta(1), epsilon(1). F(0) has three main subunits: a(1), b(2) and c(10-14). The alpha and beta chains form an alternating ring which encloses part of the gamma chain. F(1) is attached to F(0) by a central stalk formed by the gamma and epsilon chains, while a peripheral stalk is formed by the delta and b chains.

It is found in the cell inner membrane. Functionally, f(1)F(0) ATP synthase produces ATP from ADP in the presence of a proton or sodium gradient. F-type ATPases consist of two structural domains, F(1) containing the extramembraneous catalytic core and F(0) containing the membrane proton channel, linked together by a central stalk and a peripheral stalk. During catalysis, ATP synthesis in the catalytic domain of F(1) is coupled via a rotary mechanism of the central stalk subunits to proton translocation. In terms of biological role, key component of the F(0) channel; it plays a direct role in translocation across the membrane. A homomeric c-ring of between 10-14 subunits forms the central stalk rotor element with the F(1) delta and epsilon subunits. In Syntrophus aciditrophicus (strain SB), this protein is ATP synthase subunit c.